The sequence spans 100 residues: Large ribosomal subunit protein uL23 (100 aa).

Belongs to the universal ribosomal protein uL23 family. As to quaternary structure, part of the 50S ribosomal subunit. Contacts protein L29, and trigger factor when it is bound to the ribosome.

Functionally, one of the early assembly proteins it binds 23S rRNA. One of the proteins that surrounds the polypeptide exit tunnel on the outside of the ribosome. Forms the main docking site for trigger factor binding to the ribosome. This is Large ribosomal subunit protein uL23 from Aeromonas hydrophila subsp. hydrophila (strain ATCC 7966 / DSM 30187 / BCRC 13018 / CCUG 14551 / JCM 1027 / KCTC 2358 / NCIMB 9240 / NCTC 8049).